The sequence spans 442 residues: tRNA-2-methylthio-N(6)-dimethylallyladenosine synthase (442 aa).

One can recognise an MTTase N-terminal domain in the interval 2–117 (KSLYIKTYGC…LPELIVKASR (116 aa)). 6 residues coordinate [4Fe-4S] cluster: Cys-11, Cys-47, Cys-80, Cys-157, Cys-161, and Cys-164. The region spanning 143–374 (NSQGSSAFLS…QKLINKQQLE (232 aa)) is the Radical SAM core domain. The TRAM domain occupies 377–441 (QSMVGKTIPV…QNSLLGRELQ (65 aa)).

The protein belongs to the methylthiotransferase family. MiaB subfamily. As to quaternary structure, monomer. [4Fe-4S] cluster serves as cofactor.

The protein localises to the cytoplasm. The catalysed reaction is N(6)-dimethylallyladenosine(37) in tRNA + (sulfur carrier)-SH + AH2 + 2 S-adenosyl-L-methionine = 2-methylsulfanyl-N(6)-dimethylallyladenosine(37) in tRNA + (sulfur carrier)-H + 5'-deoxyadenosine + L-methionine + A + S-adenosyl-L-homocysteine + 2 H(+). Catalyzes the methylthiolation of N6-(dimethylallyl)adenosine (i(6)A), leading to the formation of 2-methylthio-N6-(dimethylallyl)adenosine (ms(2)i(6)A) at position 37 in tRNAs that read codons beginning with uridine. The protein is tRNA-2-methylthio-N(6)-dimethylallyladenosine synthase of Wolbachia sp. subsp. Brugia malayi (strain TRS).